Reading from the N-terminus, the 123-residue chain is MPTINQLIAKPRVLQKSRKKVPALQQSPQKRGVCTRVYTTTPKKPNSALRKVAKVRLTNGFEVIGYIPGEGHNLQEHSVVMIRGGRVKDLPGVRYHILRGVLDTQGVKNRKQRRSKYGAKRPK.

3-methylthioaspartic acid is present on Asp89.

It belongs to the universal ribosomal protein uS12 family. Part of the 30S ribosomal subunit. Contacts proteins S8 and S17. May interact with IF1 in the 30S initiation complex.

Its function is as follows. With S4 and S5 plays an important role in translational accuracy. Interacts with and stabilizes bases of the 16S rRNA that are involved in tRNA selection in the A site and with the mRNA backbone. Located at the interface of the 30S and 50S subunits, it traverses the body of the 30S subunit contacting proteins on the other side and probably holding the rRNA structure together. The combined cluster of proteins S8, S12 and S17 appears to hold together the shoulder and platform of the 30S subunit. The polypeptide is Small ribosomal subunit protein uS12 (Afipia carboxidovorans (strain ATCC 49405 / DSM 1227 / KCTC 32145 / OM5) (Oligotropha carboxidovorans)).